Consider the following 453-residue polypeptide: Phosphoglucosamine mutase (453 aa).

Ser102 (phosphoserine intermediate) is an active-site residue. Positions 102, 243, 245, and 247 each coordinate Mg(2+). A Phosphoserine modification is found at Ser102.

Belongs to the phosphohexose mutase family. Mg(2+) serves as cofactor. Activated by phosphorylation.

The catalysed reaction is alpha-D-glucosamine 1-phosphate = D-glucosamine 6-phosphate. Its function is as follows. Catalyzes the conversion of glucosamine-6-phosphate to glucosamine-1-phosphate. This is Phosphoglucosamine mutase from Bartonella tribocorum (strain CIP 105476 / IBS 506).